Consider the following 258-residue polypeptide: Protein SAWADEE HOMEODOMAIN HOMOLOG 1 (258 aa).

The segment at 138–244 (AWYDVSSFLT…LVRYELDNTE (107 aa)) is SAWADEE domain. Cys191, His225, Cys230, and Cys232 together coordinate Zn(2+).

In terms of assembly, associates with the RNA polymerase IV (Pol IV) complex. Interacts with NRPD1, NRPD2, NRPD3, NRPD3B, CLSY1 and CLSY2.

It localises to the nucleus. Involved in RNA-directed DNA methylation (RdDM). Required for the silencing of some endogenous RdDM targets and accumulation of 24-nt siRNAs, but not for the production of Pol V-dependent transcripts. Functions in transcriptional silencing through both DNA methylation-dependent and -independent pathways. Required for both maintenance and de-novo DNA methylation. Plays a role in the recruitment of Pol IV to genomic regions associated with K9 methylated histone H3 that are targets for RdDM. In Arabidopsis thaliana (Mouse-ear cress), this protein is Protein SAWADEE HOMEODOMAIN HOMOLOG 1 (SHH1).